The primary structure comprises 226 residues: Cell division protein SepF (226 aa).

The disordered stretch occupies residues 20 to 116; the sequence is RAYDDAGYDK…ESLTYHTRDN (97 aa). The segment covering 22-44 has biased composition (basic and acidic residues); sequence YDDAGYDKGGYRESRYRSSRYSE. The segment covering 45 to 56 has biased composition (acidic residues); sequence DFGDEDDEDEEA. The span at 62 to 95 shows a compositional bias: basic and acidic residues; it reads RRGDRSRLERAAARSGDVDHNVEGEQPERVERAS. A compositionally biased stretch (polar residues) spans 97 to 111; the sequence is RSITRSAEPSESLTY.

Belongs to the SepF family. In terms of assembly, homodimer. Interacts with FtsZ.

The protein localises to the cytoplasm. Its function is as follows. Cell division protein that is part of the divisome complex and is recruited early to the Z-ring. Probably stimulates Z-ring formation, perhaps through the cross-linking of FtsZ protofilaments. Its function overlaps with FtsA. This chain is Cell division protein SepF, found in Salinispora arenicola (strain CNS-205).